The primary structure comprises 702 residues: Ribosomal RNA large subunit methyltransferase K/L (702 aa).

A THUMP domain is found at 43-154; sequence LVYQSLMWSR…KETASIALDL (112 aa).

This sequence belongs to the methyltransferase superfamily. RlmKL family.

The protein localises to the cytoplasm. The catalysed reaction is guanosine(2445) in 23S rRNA + S-adenosyl-L-methionine = N(2)-methylguanosine(2445) in 23S rRNA + S-adenosyl-L-homocysteine + H(+). The enzyme catalyses guanosine(2069) in 23S rRNA + S-adenosyl-L-methionine = N(2)-methylguanosine(2069) in 23S rRNA + S-adenosyl-L-homocysteine + H(+). Specifically methylates the guanine in position 2445 (m2G2445) and the guanine in position 2069 (m7G2069) of 23S rRNA. The chain is Ribosomal RNA large subunit methyltransferase K/L from Shigella sonnei (strain Ss046).